Consider the following 204-residue polypeptide: Leucyl/phenylalanyl-tRNA--protein transferase (204 aa).

This sequence belongs to the L/F-transferase family.

It is found in the cytoplasm. It catalyses the reaction N-terminal L-lysyl-[protein] + L-leucyl-tRNA(Leu) = N-terminal L-leucyl-L-lysyl-[protein] + tRNA(Leu) + H(+). The enzyme catalyses N-terminal L-arginyl-[protein] + L-leucyl-tRNA(Leu) = N-terminal L-leucyl-L-arginyl-[protein] + tRNA(Leu) + H(+). The catalysed reaction is L-phenylalanyl-tRNA(Phe) + an N-terminal L-alpha-aminoacyl-[protein] = an N-terminal L-phenylalanyl-L-alpha-aminoacyl-[protein] + tRNA(Phe). Functions in the N-end rule pathway of protein degradation where it conjugates Leu, Phe and, less efficiently, Met from aminoacyl-tRNAs to the N-termini of proteins containing an N-terminal arginine or lysine. In Sinorhizobium medicae (strain WSM419) (Ensifer medicae), this protein is Leucyl/phenylalanyl-tRNA--protein transferase.